A 694-amino-acid polypeptide reads, in one-letter code: Cyclic nucleotide-gated channel alpha-3 (694 aa).

Polar residues-rich tracts occupy residues 1-11 and 112-123; these read MAKINTQYSHP and SQESNAQANVGS. 2 disordered regions span residues 1-24 and 109-152; these read MAKI…SDRD and EVSS…EEKK. Over 1-170 the chain is Cytoplasmic; that stretch reads MAKINTQYSH…VDPSSNLYYR (170 aa). A helical transmembrane segment spans residues 171–192; the sequence is WLTAIALPVFYNWYLLICRACF. Residues 193-198 lie on the Extracellular side of the membrane; the sequence is DELQSE. The helical transmembrane segment at 199–219 threads the bilayer; it reads YLMLWLVLDYSADVLYVLDVL. The Cytoplasmic segment spans residues 220 to 246; it reads VRARTGFLEQGLMVSDTNRLWQHYKTT. The helical transmembrane segment at 247-266 threads the bilayer; sequence TQFKLDVLSLVPTDLAYLKV. The Extracellular portion of the chain corresponds to 267–270; sequence GTNY. Residues 271 to 288 traverse the membrane as a helical segment; that stretch reads PEVRFNRLLKFSRLFEFF. Residues 289–298 are Cytoplasmic-facing; the sequence is DRTETRTNYP. Residues 298 to 406 are ion conduction pathway; that stretch reads PNMFRIGNLV…GNVGSMISNM (109 aa). A helical membrane pass occupies residues 299 to 321; it reads NMFRIGNLVLYILIIIHWNACIY. The Extracellular segment spans residues 322–347; the sequence is FAISKFIGFGTDSWVYPNISIPEHGR. N-linked (GalNAc...) asparagine glycosylation is present at N339. Helical transmembrane passes span 348–378 and 379–403; these read LSRK…DEEY and LFVV…GSMI. Residues 365–368 are selectivity filter; that stretch reads TIGE. Residues 404-694 are Cytoplasmic-facing; that stretch reads SNMNASRAEF…DATKTEDKQQ (291 aa). The tract at residues 408–485 is C-linker; sequence ASRAEFQAKI…TLKKVRIFQD (78 aa). A cyclic nucleotide-binding domain region spans residues 488–608; the sequence is AGLLVELVLK…EEKGRQILMK (121 aa). Residues G548, E549, S551, R564, T565, and D609 each contribute to the 3',5'-cyclic GMP site. Positions 626–669 form a coiled coil; the sequence is LEEKVEQLGSSLDTLQTRFARLLAEYNATQMKMKQRLSQLESQV. Positions 662–694 are disordered; the sequence is LSQLESQVKGGGDKPLADGEVPGDATKTEDKQQ.

Belongs to the cyclic nucleotide-gated cation channel (TC 1.A.1.5) family. CNGA3 subfamily. As to quaternary structure, forms heterotetrameric channels composed of CNGA3 and CNGB3 subunits with 3:1 stoichiometry. In terms of tissue distribution, prominently expressed in retina.

Its subcellular location is the cell membrane. The catalysed reaction is Ca(2+)(in) = Ca(2+)(out). It catalyses the reaction Na(+)(in) = Na(+)(out). The enzyme catalyses K(+)(in) = K(+)(out). It carries out the reaction NH4(+)(in) = NH4(+)(out). The catalysed reaction is Rb(+)(in) = Rb(+)(out). It catalyses the reaction Li(+)(in) = Li(+)(out). The enzyme catalyses Cs(+)(in) = Cs(+)(out). Inhibited by L-cis-diltiazem. In terms of biological role, pore-forming subunit of the cone cyclic nucleotide-gated channel. Mediates cone photoresponses at bright light converting transient changes in intracellular cGMP levels into electrical signals. In the dark, cGMP levels are high and keep the channel open enabling a steady inward current carried by Na(+) and Ca(2+) ions that leads to membrane depolarization and neurotransmitter release from synaptic terminals. Upon photon absorption cGMP levels decline leading to channel closure and membrane hyperpolarization that ultimately slows neurotransmitter release and signals the presence of light, the end point of the phototransduction cascade. Pore-forming subunit of the gustatory cyclic nucleotide-gated channel. In the taste buds, may sense oral extracellular pH and conduct ion currents that modulate the excitability of taste cells. Conducts cGMP- and cAMP-gated ion currents, with permeability for monovalent and divalent cations. The chain is Cyclic nucleotide-gated channel alpha-3 from Homo sapiens (Human).